We begin with the raw amino-acid sequence, 229 residues long: Sugar fermentation stimulation protein homolog (229 aa).

It belongs to the SfsA family.

This is Sugar fermentation stimulation protein homolog from Caldanaerobacter subterraneus subsp. tengcongensis (strain DSM 15242 / JCM 11007 / NBRC 100824 / MB4) (Thermoanaerobacter tengcongensis).